The primary structure comprises 176 residues: Heme oxygenase HutZ (176 aa).

H170 provides a ligand contact to heme.

This sequence belongs to the heme oxygenase HugZ/HutZ family. As to quaternary structure, homodimer. Interacts with HutX, leading to the transfer of the heme from HutX to apo-HutZ.

The catalysed reaction is heme b + 3 AH2 + 3 O2 + 2 H(+) = biliverdin IXbeta + CO + Fe(2+) + 3 A + 3 H2O. It catalyses the reaction heme b + 3 AH2 + 3 O2 + 3 H(+) = biliverdin IXdelta + CO + Fe(2+) + 3 A + 3 H2O. Its activity is regulated as follows. Activity is pH-dependent. A proximal hydrogen bond between Asp-132 and the heme axial ligant His-170 is essential for heme degradation activity. Heme-degradation reaction is inhibited by iron chelators. Functionally, involved in heme degradation. Catalyzes the degradation of heme to biliverdin, with the release of iron. Forms biliverdin beta and delta. Binds heme with high efficiency. In Vibrio cholerae serotype O1 (strain ATCC 39315 / El Tor Inaba N16961), this protein is Heme oxygenase HutZ.